The following is a 553-amino-acid chain: Hydroxylamine reductase (553 aa).

Cys3, Cys6, Cys18, and Cys25 together coordinate [2Fe-2S] cluster. Hybrid [4Fe-2O-2S] cluster-binding residues include His252, Glu276, Cys320, Cys408, Cys436, Cys461, Glu495, and Lys497. Cysteine persulfide is present on Cys408.

It belongs to the HCP family. It depends on [2Fe-2S] cluster as a cofactor. Hybrid [4Fe-2O-2S] cluster is required as a cofactor.

Its subcellular location is the cytoplasm. The catalysed reaction is A + NH4(+) + H2O = hydroxylamine + AH2 + H(+). In terms of biological role, catalyzes the reduction of hydroxylamine to form NH(3) and H(2)O. In Vibrio parahaemolyticus serotype O3:K6 (strain RIMD 2210633), this protein is Hydroxylamine reductase.